Reading from the N-terminus, the 584-residue chain is Arginine--tRNA ligase (584 aa).

Positions 127–137 (PNLAKEMHVGH) match the 'HIGH' region motif.

It belongs to the class-I aminoacyl-tRNA synthetase family. As to quaternary structure, monomer.

The protein resides in the cytoplasm. The enzyme catalyses tRNA(Arg) + L-arginine + ATP = L-arginyl-tRNA(Arg) + AMP + diphosphate. The polypeptide is Arginine--tRNA ligase (Alcanivorax borkumensis (strain ATCC 700651 / DSM 11573 / NCIMB 13689 / SK2)).